The sequence spans 308 residues: tRNA dimethylallyltransferase (308 aa).

19–26 (GPTASGKS) contacts ATP. Position 21–26 (21–26 (TASGKS)) interacts with substrate. The segment at 44–47 (DSMQ) is interaction with substrate tRNA.

The protein belongs to the IPP transferase family. Monomer. Requires Mg(2+) as cofactor.

The catalysed reaction is adenosine(37) in tRNA + dimethylallyl diphosphate = N(6)-dimethylallyladenosine(37) in tRNA + diphosphate. Its function is as follows. Catalyzes the transfer of a dimethylallyl group onto the adenine at position 37 in tRNAs that read codons beginning with uridine, leading to the formation of N6-(dimethylallyl)adenosine (i(6)A). This chain is tRNA dimethylallyltransferase, found in Methylobacterium radiotolerans (strain ATCC 27329 / DSM 1819 / JCM 2831 / NBRC 15690 / NCIMB 10815 / 0-1).